The chain runs to 396 residues: Phosphoglycerate kinase (396 aa).

Residues 22–24 (DLN), Arg37, 60–63 (HFGR), Arg118, and Arg151 contribute to the substrate site. Residues Lys201, Glu323, and 353-356 (GGDT) each bind ATP.

The protein belongs to the phosphoglycerate kinase family. As to quaternary structure, monomer.

The protein resides in the cytoplasm. The enzyme catalyses (2R)-3-phosphoglycerate + ATP = (2R)-3-phospho-glyceroyl phosphate + ADP. Its pathway is carbohydrate degradation; glycolysis; pyruvate from D-glyceraldehyde 3-phosphate: step 2/5. This is Phosphoglycerate kinase from Xanthobacter autotrophicus (strain ATCC BAA-1158 / Py2).